Here is a 247-residue protein sequence, read N- to C-terminus: Phosphoribosylaminoimidazole-succinocarboxamide synthase (247 aa).

The protein belongs to the SAICAR synthetase family.

It carries out the reaction 5-amino-1-(5-phospho-D-ribosyl)imidazole-4-carboxylate + L-aspartate + ATP = (2S)-2-[5-amino-1-(5-phospho-beta-D-ribosyl)imidazole-4-carboxamido]succinate + ADP + phosphate + 2 H(+). It participates in purine metabolism; IMP biosynthesis via de novo pathway; 5-amino-1-(5-phospho-D-ribosyl)imidazole-4-carboxamide from 5-amino-1-(5-phospho-D-ribosyl)imidazole-4-carboxylate: step 1/2. This chain is Phosphoribosylaminoimidazole-succinocarboxamide synthase, found in Synechococcus sp. (strain JA-2-3B'a(2-13)) (Cyanobacteria bacterium Yellowstone B-Prime).